We begin with the raw amino-acid sequence, 454 residues long: tRNA modification GTPase MnmE (454 aa).

(6S)-5-formyl-5,6,7,8-tetrahydrofolate is bound by residues R23, E80, and K120. A TrmE-type G domain is found at 216–377; that stretch reads GMKVVIAGRP…LRNHLKQSMG (162 aa). N226 contacts K(+). Residues 226-231, 245-251, 270-273, 335-338, and 358-360 contribute to the GTP site; these read NAGKSS, TDIAGTT, DTAG, NKAD, and SAR. S230 is a binding site for Mg(2+). Residues T245, I247, and T250 each contribute to the K(+) site. T251 provides a ligand contact to Mg(2+). K454 provides a ligand contact to (6S)-5-formyl-5,6,7,8-tetrahydrofolate.

Belongs to the TRAFAC class TrmE-Era-EngA-EngB-Septin-like GTPase superfamily. TrmE GTPase family. As to quaternary structure, homodimer. Heterotetramer of two MnmE and two MnmG subunits. Requires K(+) as cofactor.

The protein localises to the cytoplasm. Functionally, exhibits a very high intrinsic GTPase hydrolysis rate. Involved in the addition of a carboxymethylaminomethyl (cmnm) group at the wobble position (U34) of certain tRNAs, forming tRNA-cmnm(5)s(2)U34. This Shigella sonnei (strain Ss046) protein is tRNA modification GTPase MnmE.